Reading from the N-terminus, the 240-residue chain is Uridylate kinase (240 aa).

12-15 (KLSG) contacts ATP. Position 54 (G54) interacts with UMP. Positions 55 and 59 each coordinate ATP. Residues D74 and 135-142 (TGNPFFTT) each bind UMP. The ATP site is built by T162, Y168, and D171.

Belongs to the UMP kinase family. In terms of assembly, homohexamer.

The protein resides in the cytoplasm. It carries out the reaction UMP + ATP = UDP + ADP. Its pathway is pyrimidine metabolism; CTP biosynthesis via de novo pathway; UDP from UMP (UMPK route): step 1/1. Its activity is regulated as follows. Inhibited by UTP. In terms of biological role, catalyzes the reversible phosphorylation of UMP to UDP. This Xanthomonas campestris pv. campestris (strain ATCC 33913 / DSM 3586 / NCPPB 528 / LMG 568 / P 25) protein is Uridylate kinase.